Here is a 191-residue protein sequence, read N- to C-terminus: Large ribosomal subunit protein uL3 (191 aa).

A disordered region spans residues 115–137 (GGPASHGSRFHRRHGSIGNREWP).

Belongs to the universal ribosomal protein uL3 family. In terms of assembly, part of the 50S ribosomal subunit. Forms a cluster with proteins L14 and L19.

Functionally, one of the primary rRNA binding proteins, it binds directly near the 3'-end of the 23S rRNA, where it nucleates assembly of the 50S subunit. This Campylobacter jejuni subsp. jejuni serotype O:2 (strain ATCC 700819 / NCTC 11168) protein is Large ribosomal subunit protein uL3 (rplC).